The primary structure comprises 152 residues: MRLPLSHSPEHVEMALLSNILAAYSFVSENPERAALYFVSGVCIGLVLTLAALVIRISCHTDCRRRPGKKFLQDRESSSDSSDSEDGSEDTVSDLSVRRHRRFERTLNKNVFTSAEELERAQRLEERERIIREIWMNGQPEVPGTRSLNRYY.

Positions 1–60 (MRLPLSHSPEHVEMALLSNILAAYSFVSENPERAALYFVSGVCIGLVLTLAALVIRISCH) are necessary for the localization and biological activity. Residues 35 to 55 (ALYFVSGVCIGLVLTLAALVI) traverse the membrane as a helical segment. A disordered region spans residues 70-97 (KFLQDRESSSDSSDSEDGSEDTVSDLSV). The span at 82–92 (SDSEDGSEDTV) shows a compositional bias: acidic residues. A Phosphothreonine modification is found at T106. S114 bears the Phosphoserine; by FAM20C mark.

It belongs to the EVA1 family. As to expression, expressed in lung, kidney, liver, pancreas, placenta, but not in heart and skeletal muscle.

It is found in the endoplasmic reticulum membrane. The protein localises to the lysosome membrane. Acts as a regulator of programmed cell death, mediating both autophagy and apoptosis. The protein is Protein eva-1 homolog A (EVA1A) of Homo sapiens (Human).